The following is a 315-amino-acid chain: MSDSLRIIFAGTPDFAARHLDALLTSGHNVVGVFTQPDRPAGRGKKLMPSPVKVLAEEKGLPVFQPVSLRPQENQHLVADLHADVMVVVAYGLILPKAVLDMPRLGCINVHGSLLPRWRGAAPIQRSLWAGDAETGVTIMQMDVGLDTGDMLYKLACPITAEDTSGSLYNKLAELGPQGLITTLKQLADGTATPEAQNEALVTHAEKLSKEEARIDWSLSAAQLERCIRAFNPWPMSWLEIDGQPVKVWQASVIEDATQSLPGTILAATKQGIQVATGKGILNLLSLQPAGKKAMSAQDLLNSRREWFIPGNRLA.

The N-terminal domain stretch occupies residues 2–189; the sequence is SDSLRIIFAG…LITTLKQLAD (188 aa). 113–116 is a (6S)-5,6,7,8-tetrahydrofolate binding site; that stretch reads SLLP. A C-terminal domain region spans residues 210 to 315; the sequence is KEEARIDWSL…EWFIPGNRLA (106 aa).

The protein belongs to the Fmt family.

The enzyme catalyses L-methionyl-tRNA(fMet) + (6R)-10-formyltetrahydrofolate = N-formyl-L-methionyl-tRNA(fMet) + (6S)-5,6,7,8-tetrahydrofolate + H(+). In terms of biological role, attaches a formyl group to the free amino group of methionyl-tRNA(fMet). The formyl group appears to play a dual role in the initiator identity of N-formylmethionyl-tRNA by promoting its recognition by IF2 and preventing the misappropriation of this tRNA by the elongation apparatus. The protein is Methionyl-tRNA formyltransferase of Salmonella choleraesuis (strain SC-B67).